The sequence spans 57 residues: Large ribosomal subunit protein bL32 (57 aa).

Residues 1–19 show a composition bias toward basic residues; it reads MATPKRRMSRANTRSRRSQ. The segment at 1-21 is disordered; it reads MATPKRRMSRANTRSRRSQWK.

The protein belongs to the bacterial ribosomal protein bL32 family.

This chain is Large ribosomal subunit protein bL32, found in Mycobacterium ulcerans (strain Agy99).